A 510-amino-acid polypeptide reads, in one-letter code: Lysine--tRNA ligase (510 aa).

Residues glutamate 420 and glutamate 427 each coordinate Mg(2+).

Belongs to the class-II aminoacyl-tRNA synthetase family. Homodimer. Mg(2+) serves as cofactor.

It localises to the cytoplasm. The enzyme catalyses tRNA(Lys) + L-lysine + ATP = L-lysyl-tRNA(Lys) + AMP + diphosphate. This chain is Lysine--tRNA ligase, found in Psychrobacter sp. (strain PRwf-1).